The sequence spans 232 residues: 7-cyano-7-deazaguanine synthase (232 aa).

8-18 (FSGGQDSTTCL) is an ATP binding site. Cysteine 189, cysteine 198, cysteine 201, and cysteine 204 together coordinate Zn(2+).

This sequence belongs to the QueC family. It depends on Zn(2+) as a cofactor.

It catalyses the reaction 7-carboxy-7-deazaguanine + NH4(+) + ATP = 7-cyano-7-deazaguanine + ADP + phosphate + H2O + H(+). The protein operates within purine metabolism; 7-cyano-7-deazaguanine biosynthesis. Catalyzes the ATP-dependent conversion of 7-carboxy-7-deazaguanine (CDG) to 7-cyano-7-deazaguanine (preQ(0)). This chain is 7-cyano-7-deazaguanine synthase, found in Yersinia enterocolitica serotype O:8 / biotype 1B (strain NCTC 13174 / 8081).